The sequence spans 499 residues: Glutamate--tRNA ligase (499 aa).

The 'HIGH' region signature appears at 12 to 22 (PSPTGHLHIGN). Residues 259–263 (KLSKR) carry the 'KMSKS' region motif. An ATP-binding site is contributed by K262.

Belongs to the class-I aminoacyl-tRNA synthetase family. Glutamate--tRNA ligase type 1 subfamily. In terms of assembly, monomer.

It is found in the cytoplasm. It catalyses the reaction tRNA(Glu) + L-glutamate + ATP = L-glutamyl-tRNA(Glu) + AMP + diphosphate. Functionally, catalyzes the attachment of glutamate to tRNA(Glu) in a two-step reaction: glutamate is first activated by ATP to form Glu-AMP and then transferred to the acceptor end of tRNA(Glu). This chain is Glutamate--tRNA ligase, found in Lactobacillus gasseri (strain ATCC 33323 / DSM 20243 / BCRC 14619 / CIP 102991 / JCM 1131 / KCTC 3163 / NCIMB 11718 / NCTC 13722 / AM63).